Reading from the N-terminus, the 311-residue chain is Putative dihydroorotate dehydrogenase A (fumarate) (311 aa).

Substrate-binding positions include lysine 45, 69 to 73 (NSMGL), and asparagine 128. 45-46 (KT) serves as a coordination point for FMN. Residue asparagine 128 coordinates FMN. The active-site Nucleophile is the cysteine 131. 2 residues coordinate FMN: lysine 165 and valine 193. Position 194-195 (194-195 (NS)) interacts with substrate. Residues glycine 220, 248–249 (GG), and 270–271 (GT) contribute to the FMN site.

This sequence belongs to the dihydroorotate dehydrogenase family. Type 1 subfamily. Homodimer. The cofactor is FMN.

It localises to the cytoplasm. The enzyme catalyses (S)-dihydroorotate + fumarate = orotate + succinate. Its pathway is pyrimidine metabolism; UMP biosynthesis via de novo pathway. In terms of biological role, catalyzes the conversion of dihydroorotate to orotate with fumarate as the electron acceptor. The chain is Putative dihydroorotate dehydrogenase A (fumarate) (pyrD) from Streptococcus pyogenes serotype M1.